We begin with the raw amino-acid sequence, 87 residues long: Putative defensin-like protein 84 (87 aa).

The signal sequence occupies residues 1 to 27; the sequence is MTTKMVSSHRLLTLMVFALLLIPMISG. 4 cysteine pairs are disulfide-bonded: C32-C73, C36-C54, C42-C71, and C46-C72.

The protein belongs to the DEFL family.

It is found in the secreted. The sequence is that of Putative defensin-like protein 84 from Arabidopsis thaliana (Mouse-ear cress).